Here is a 243-residue protein sequence, read N- to C-terminus: Small ribosomal subunit protein uS3 (243 aa).

Residues Ile39–Arg107 form the KH type-2 domain. The tract at residues Ala214–Ala243 is disordered. A compositionally biased stretch (basic and acidic residues) spans Ser229–Ala243.

Belongs to the universal ribosomal protein uS3 family. As to quaternary structure, part of the 30S ribosomal subunit. Forms a tight complex with proteins S10 and S14.

Binds the lower part of the 30S subunit head. Binds mRNA in the 70S ribosome, positioning it for translation. In Agrobacterium fabrum (strain C58 / ATCC 33970) (Agrobacterium tumefaciens (strain C58)), this protein is Small ribosomal subunit protein uS3.